Consider the following 528-residue polypeptide: 4-chlorobenzoate--CoA ligase (528 aa).

ATP-binding positions include 161-169 (TSGTTGLPK), 300-305 (NIYGTT), and N409.

It belongs to the ATP-dependent AMP-binding enzyme family. In terms of assembly, homodimer. Mg(2+) is required as a cofactor.

It catalyses the reaction 4-chlorobenzoate + ATP + CoA = 4-chlorobenzoyl-CoA + AMP + diphosphate. The protein operates within xenobiotic degradation; 4-chlorobenzoate degradation; 4-hydroxybenzoate from 4-chlorobenzoate: step 2/3. Unaffected by 5,5'-dithiobis-(2-nitrobenzoic acid), 4-chloromercuribenzoate and sodium azide. Inhibited by Cu(2+), Fe(2+) and Zn(2+). Unaffected by Na(+), K(+) and Li(+). Functionally, catalyzes the formation of chlorobenzoyl-CoA via a 2 step reaction. First 4-chlorobenzoyl is adenylated by ATP, followed by acyl transfer from the 4-chlorobenzoyl-AMP intermediate to CoA. Benzoate, 4-bromobenzoate, 4-iodobenzoate and 4-methylbenzoate also act as substrates. Inactive towards 4-aminobenzoate, 4-hydroxybenzoate, 2-aminobenzoate, 2,3-dihydroxybenzoate, 4-coumarate and the aliphatic carboxylic acids palmate, caproate, laurate and butyrate. Negligible activity is detected when ATP is replaced by UTP, CTP or GTP as cosubstrate. The protein is 4-chlorobenzoate--CoA ligase of Pseudomonas sp. (strain CBS-3).